Here is a 629-residue protein sequence, read N- to C-terminus: Mitochondrial Rho GTPase 1 (629 aa).

At methionine 1–arginine 600 the chain is on the cytoplasmic side. Positions serine 2–histidine 170 constitute a Miro 1 domain. GTP contacts are provided by residues glycine 11 to serine 18, aspartate 59 to arginine 63, and asparagine 115 to aspartate 118. 2 consecutive EF-hand domains span residues alanine 186–lysine 221 and alanine 306–leucine 341. 9 residues coordinate Ca(2+): aspartate 199, aspartate 201, aspartate 203, tyrosine 205, glutamate 210, aspartate 319, aspartate 321, aspartate 323, and glutamate 330. One can recognise a Miro 2 domain in the interval arginine 421 to asparagine 585. GTP-binding positions include glycine 430–serine 437, glutamate 466–glycine 470, and leucine 535–aspartate 538. Residues alanine 601–tryptophan 621 traverse the membrane as a helical; Anchor for type IV membrane protein segment. Residues arginine 622–alanine 629 lie on the Mitochondrial intermembrane side of the membrane.

The protein belongs to the mitochondrial Rho GTPase family.

The protein resides in the mitochondrion outer membrane. In terms of biological role, mitochondrial GTPase involved in mitochondrial trafficking. Probably involved in control of anterograde transport of mitochondria and their subcellular distribution. The sequence is that of Mitochondrial Rho GTPase 1 (gem-1) from Neurospora crassa (strain ATCC 24698 / 74-OR23-1A / CBS 708.71 / DSM 1257 / FGSC 987).